A 143-amino-acid polypeptide reads, in one-letter code: Large ribosomal subunit protein uL15 (143 aa).

The disordered stretch occupies residues 1–45; the sequence is MLLNTVQPGVGAKHAKRRVGRGIGSGLGKTCGRGHKGQKSRAGGF. Gly residues predominate over residues 21-31; it reads RGIGSGLGKTC.

This sequence belongs to the universal ribosomal protein uL15 family. Part of the 50S ribosomal subunit.

In terms of biological role, binds to the 23S rRNA. The chain is Large ribosomal subunit protein uL15 from Chromobacterium violaceum (strain ATCC 12472 / DSM 30191 / JCM 1249 / CCUG 213 / NBRC 12614 / NCIMB 9131 / NCTC 9757 / MK).